The chain runs to 402 residues: MDSDDESEAVHSVFNTVSQEGGKIFEQREILQIDYVPSENRIVGRDEQIEKVAGEIGPIVVGQPPNSIIIYGKTGCGKSLVAKHVSKIAREEAENRGVKLATGYVNCQQAKGNSDALSKYGRAINPPESGVKFPTRGISENEYFERVWSVLNEFYDAAIIVLDEVDKLNNDDLLMALSRAGEDGSVDVPIGVIAVSNKINYRDKMSERTKSSFGHNEFIFEPYDADQIREILQNRTDAFADGVLDDGVIPRAAALSAKEHGDARKAMRLLRYAGDQANKENAERVKESHLTDARASAEVDRLLELISGLPPHSKHVLLALANLTKNHPDREWFRTVRVREIYLEVCDRSGADPLSAERTRQLLNELCFLEVAGSRRGTGEGKGHYSQYTLLWDADIVLTLGN.

ATP-binding residues include Tyr223 and Arg235.

The protein belongs to the CDC6/cdc18 family.

Its function is as follows. Involved in regulation of DNA replication. In Haloarcula marismortui (strain ATCC 43049 / DSM 3752 / JCM 8966 / VKM B-1809) (Halobacterium marismortui), this protein is ORC1-type DNA replication protein 17 (cdc6q).